Here is a 147-residue protein sequence, read N- to C-terminus: Small ribosomal subunit protein bS6 (147 aa).

The tract at residues 103–147 (AARMAANLPSFPEDEDTEEKGSAPLAREEEGIGEEAQTDEAEDKE) is disordered. Residues 133 to 147 (GIGEEAQTDEAEDKE) are compositionally biased toward acidic residues.

The protein belongs to the bacterial ribosomal protein bS6 family.

In terms of biological role, binds together with bS18 to 16S ribosomal RNA. This is Small ribosomal subunit protein bS6 from Syntrophobacter fumaroxidans (strain DSM 10017 / MPOB).